The chain runs to 1484 residues: Ral GTPase-activating protein subunit beta (1484 aa).

2 disordered regions span residues 355 to 437 (PRSD…APRR) and 699 to 728 (ENNLKSHSRTNSGISSASGGSTEPTTPDSE). Serine 359 carries the post-translational modification Phosphoserine. Phosphothreonine occurs at positions 363 and 379. Composition is skewed to polar residues over residues 369 to 381 (SMPQSAAVNTTPP), 392 to 428 (NKATMKTSTVTTAHTSKVQHQASSTSPLSSPNQTSSE), and 701 to 725 (NLKSHSRTNSGISSASGGSTEPTTP). 2 positions are modified to phosphoserine: serine 421 and serine 710. Position 724 is a phosphothreonine (threonine 724). A Rap-GAP domain is found at 1138-1382 (IGYLDLLPCR…TTLEKEVPVI (245 aa)). Serine 1275 is modified (phosphoserine). The segment at 1297–1325 (PNHTDSLNSSQRLSPSSRMKKLPQGRPVP) is disordered. The segment covering 1302–1313 (SLNSSQRLSPSS) has biased composition (low complexity).

In terms of assembly, component of the heterodimeric RalGAP1 complex with RALGAPA1 and of the heterodimeric RalGAP2 complex with RALGAPA2. Heterodimerization is required for activity. Abundantly expressed in testis, pancreas, lung, thymus, brown fat, and white fat. Expressed at lower levels in the brain.

Its function is as follows. Non-catalytic subunit of the heterodimeric RalGAP1 and RalGAP2 complexes which act as GTPase activators for the Ras-like small GTPases RALA and RALB. The sequence is that of Ral GTPase-activating protein subunit beta (Ralgapb) from Mus musculus (Mouse).